The chain runs to 91 residues: Putative membrane protein insertion efficiency factor (91 aa).

A disordered region spans residues 72–91 (SGGNDPVPEKLTHINHQHEK). The segment covering 78–91 (VPEKLTHINHQHEK) has biased composition (basic and acidic residues).

It belongs to the UPF0161 family.

Its subcellular location is the cell inner membrane. Its function is as follows. Could be involved in insertion of integral membrane proteins into the membrane. The sequence is that of Putative membrane protein insertion efficiency factor from Pseudoalteromonas translucida (strain TAC 125).